Here is a 179-residue protein sequence, read N- to C-terminus: Large ribosomal subunit protein uL6 (179 aa).

Belongs to the universal ribosomal protein uL6 family. As to quaternary structure, part of the 50S ribosomal subunit.

This protein binds to the 23S rRNA, and is important in its secondary structure. It is located near the subunit interface in the base of the L7/L12 stalk, and near the tRNA binding site of the peptidyltransferase center. This Synechococcus elongatus (strain ATCC 33912 / PCC 7942 / FACHB-805) (Anacystis nidulans R2) protein is Large ribosomal subunit protein uL6.